A 438-amino-acid chain; its full sequence is Choline monooxygenase, chloroplastic (438 aa).

The transit peptide at 1–58 (MAASATTMLLKYPTTVCGIPNSSANNSTDPSNNIVQIPQTTTTNSPLLKFRTPNKPVN) directs the protein to the chloroplast. Residues 121 to 228 (WQVAGYSDQV…VAVWGPFILI (108 aa)) form the Rieske domain. The [2Fe-2S] cluster site is built by Cys163, His165, Cys182, and His185. The Fe cation site is built by His288 and His293.

Belongs to the choline monooxygenase family. [2Fe-2S] cluster is required as a cofactor. Requires Fe cation as cofactor. It depends on Mg(2+) as a cofactor. Expressed in roots and leaves.

Its subcellular location is the plastid. The protein resides in the chloroplast stroma. The catalysed reaction is choline + 2 reduced [2Fe-2S]-[ferredoxin] + O2 + 2 H(+) = betaine aldehyde hydrate + 2 oxidized [2Fe-2S]-[ferredoxin] + H2O. Its pathway is amine and polyamine biosynthesis; betaine biosynthesis via choline pathway; betaine aldehyde from choline (monooxygenase route): step 1/1. Its function is as follows. Catalyzes the first step of the osmoprotectant glycine betaine synthesis. The sequence is that of Choline monooxygenase, chloroplastic (CMO) from Atriplex hortensis (Mountain spinach).